The primary structure comprises 663 residues: DNA topoisomerase 4 subunit B (663 aa).

Residues Y21, N61, D88, 130-136, and K360 contribute to the ATP site; that span reads GLHGVGI. In terms of domain architecture, Toprim spans 440 to 554; the sequence is TELFIVEGDS…EGHLYLAKPP (115 aa). Mg(2+)-binding residues include E446, D519, and D521.

It belongs to the type II topoisomerase family. ParE type 1 subfamily. As to quaternary structure, heterotetramer composed of ParC and ParE. Mg(2+) is required as a cofactor. Mn(2+) serves as cofactor. Requires Ca(2+) as cofactor.

It catalyses the reaction ATP-dependent breakage, passage and rejoining of double-stranded DNA.. Its function is as follows. Topoisomerase IV is essential for chromosome segregation. It relaxes supercoiled DNA. Performs the decatenation events required during the replication of a circular DNA molecule. The sequence is that of DNA topoisomerase 4 subunit B from Rickettsia typhi (strain ATCC VR-144 / Wilmington).